Reading from the N-terminus, the 378-residue chain is UDP-4-amino-4-deoxy-L-arabinose--oxoglutarate aminotransferase (378 aa).

Lysine 182 is modified (N6-(pyridoxal phosphate)lysine).

It belongs to the DegT/DnrJ/EryC1 family. ArnB subfamily. Homodimer. Pyridoxal 5'-phosphate is required as a cofactor.

The enzyme catalyses UDP-4-amino-4-deoxy-beta-L-arabinose + 2-oxoglutarate = UDP-beta-L-threo-pentopyranos-4-ulose + L-glutamate. It functions in the pathway nucleotide-sugar biosynthesis; UDP-4-deoxy-4-formamido-beta-L-arabinose biosynthesis; UDP-4-deoxy-4-formamido-beta-L-arabinose from UDP-alpha-D-glucuronate: step 2/3. The protein operates within bacterial outer membrane biogenesis; lipopolysaccharide biosynthesis. In terms of biological role, catalyzes the conversion of UDP-4-keto-arabinose (UDP-Ara4O) to UDP-4-amino-4-deoxy-L-arabinose (UDP-L-Ara4N). The modified arabinose is attached to lipid A and is required for resistance to polymyxin and cationic antimicrobial peptides. This is UDP-4-amino-4-deoxy-L-arabinose--oxoglutarate aminotransferase from Aeromonas salmonicida (strain A449).